Consider the following 293-residue polypeptide: MKKKLILGLVMMMALFSLAACGGGGDVVKTDSGDVTKDELYDAMKDKYGSEFVQQLTFEKILGDKYKVSDEDVDKKFNEYKSQYGDQFSAVLTQSGLTEKSFKSQLKYNLLVQKATEANTDTSDKTLKKYYETWQPDITVSHILVADENKAKEVEQKLKDGEKFADLAKEYSTDTATKDNGGQLAPFGPGKMDPAFEKAAYALKNKGDISAPVKTQYGYHIIQMDKPATKTTFEKDKKAVKASYLESQLTTENMQKTLKKEYKDANVKVEDKDLKDAFKDFDGSSSSDSDSSK.

A signal peptide spans 1 to 20 (MKKKLILGLVMMMALFSLAA). Residue Cys21 is the site of N-palmitoyl cysteine attachment. Cys21 carries the S-diacylglycerol cysteine lipid modification. Residues 135-226 (QPDITVSHIL…YGYHIIQMDK (92 aa)) enclose the PpiC domain.

Belongs to the PrsA family.

It is found in the cell membrane. It catalyses the reaction [protein]-peptidylproline (omega=180) = [protein]-peptidylproline (omega=0). Its function is as follows. Plays a major role in protein secretion by helping the post-translocational extracellular folding of several secreted proteins. The sequence is that of Foldase protein PrsA 2 (prsA2) from Listeria monocytogenes serovar 1/2a (strain ATCC BAA-679 / EGD-e).